We begin with the raw amino-acid sequence, 431 residues long: Beta-lactamase hydrolase-like protein (431 aa).

Residues His-212, His-214, and His-286 each coordinate Zn(2+). Substrate is bound at residue Asp-309.

The protein belongs to the metallo-beta-lactamase superfamily. Zn(2+) serves as cofactor.

Functionally, could play a role in cell adherence or biofilm development. This is Beta-lactamase hydrolase-like protein from Xylella fastidiosa (strain Temecula1 / ATCC 700964).